The primary structure comprises 269 residues: Surfeit locus protein 4 (269 aa).

Transmembrane regions (helical) follow at residues 65–85 (LASS…VLVL), 92–112 (YACF…SILW), 179–199 (FFSI…AIGF), 203–223 (LAAL…NAFW), and 242–262 (TMSV…GVSM). The short motif at 266 to 269 (KKEW) is the Di-lysine motif element.

Belongs to the SURF4 family. Found in a complex composed at least of SURF4, TMED2 and TMED10. May interact with LMAN1. Interacts with ZFYVE27 and with KIF5A in a ZFYVE27-dependent manner. Interacts with STING1. Interacts with SAR1B. Interacts with TMEM41B.

The protein localises to the endoplasmic reticulum membrane. Its subcellular location is the endoplasmic reticulum-Golgi intermediate compartment membrane. It localises to the golgi apparatus membrane. In terms of biological role, endoplasmic reticulum cargo receptor that mediates the export of lipoproteins by recruiting cargos into COPII vesicles to facilitate their secretion. Acts as a cargo receptor for lipoproteins bearing both APOB and APOA1, thereby regulating lipoprotein delivery and the maintenance of lipid homeostasis. Synergizes with the GTPase SAR1B to mediate transport of circulating lipoproteins. Promotes the secretion of PCSK9. Also mediates the efficient secretion of erythropoietin (EPO). May also play a role in the maintenance of the architecture of the endoplasmic reticulum-Golgi intermediate compartment and of the Golgi. The polypeptide is Surfeit locus protein 4 (Mus musculus (Mouse)).